Reading from the N-terminus, the 1367-residue chain is Histone acetyltransferase HAC2 (1367 aa).

The disordered stretch occupies residues 110–151 (TSSIPGSSGSASETNSGSDITKQDFKNDSPSDSKKVQGSSTS). Residues 111-127 (SSIPGSSGSASETNSGS) show a composition bias toward low complexity. Over residues 130 to 144 (TKQDFKNDSPSDSKK) the composition is skewed to basic and acidic residues. 12 consecutive repeat copies span residues 188–200 (KLGTVVDIVEPMK), 223–235 (KVYSFADVVTTTK), 251–263 (KLGTVVDIIEPMK), 286–298 (KVYSFADVVTTTK), 314–326 (KLGTVVDIVEPMK), 349–361 (KVYSFADVVTTTK), 377–389 (KLGTVVDIVEPMK), 418–430 (KLGTVVDIVEPMK), 432–444 (DEGSKCEVTTTNK), 459–471 (KLGIGVDIVEPMK), 473–485 (DEGTKCEVTTTNK), and 500–512 (KLGIGVDIVEPMK). The tract at residues 188-512 (KLGTVVDIVE…IGVDIVEPMK (325 aa)) is 12 X 13 AA approximate repeats. The PHD-type zinc finger occupies 688–765 (HQICSPCHSR…EYICPTCLLE (78 aa)). Residues 780–1213 (DSGAKDLPET…ILHHLHTSNK (434 aa)) form the CBP/p300-type HAT domain. Acetyl-CoA-binding positions include 903-905 (LDS), 922-923 (RT), and Trp-978. The ZZ-type 1; degenerate zinc-finger motif lies at 1094–1157 (ELNYSCTRCS…QLSKVQVNGV (64 aa)). Zn(2+) contacts are provided by Cys-1099, Cys-1102, Cys-1123, Cys-1126, Cys-1225, Cys-1228, Cys-1240, Cys-1243, Cys-1249, Cys-1252, His-1261, and His-1263. A ZZ-type 2 zinc finger spans residues 1220–1273 (SSSLTCTACKKDVSTTIYFPCLLCPDYRACTGCYTKNRTLRHLHIFPTLPSANR). Residues 1274–1359 (APSRTVMVLE…NCPVPQCRDR (86 aa)) form a TAZ-type zinc finger.

As to expression, rosette leaves, stems and flowers.

The protein localises to the nucleus. It carries out the reaction L-lysyl-[protein] + acetyl-CoA = N(6)-acetyl-L-lysyl-[protein] + CoA + H(+). Functionally, acetyltransferase enzyme. Acetylates histones, giving a specific tag for transcriptional activation. No acetyltransferase activity found in vitro. The chain is Histone acetyltransferase HAC2 (HAC2) from Arabidopsis thaliana (Mouse-ear cress).